We begin with the raw amino-acid sequence, 148 residues long: UPF0260 protein KPK_1978 (148 aa).

Belongs to the UPF0260 family.

The sequence is that of UPF0260 protein KPK_1978 from Klebsiella pneumoniae (strain 342).